Reading from the N-terminus, the 413-residue chain is Palmitoyltransferase ZDHHC6 (413 aa).

Residues 1–24 lie on the Cytoplasmic side of the membrane; the sequence is MGIFCSVIKFENLQDLRRLCHWGP. Residues 25-45 form a helical membrane-spanning segment; the sequence is IIALGVIAICSTMAMIDSVLW. Over 46 to 57 the chain is Lumenal; that stretch reads YWPLHTTGGSVN. The chain crosses the membrane as a helical span at residues 58 to 78; it reads FIMLINWTVMILYNYFNAMFA. The Cytoplasmic segment spans residues 79 to 143; sequence GPGFVPRGWK…NCCGHQNHAS (65 aa). Positions 99–149 constitute a DHHC domain; that stretch reads QYCKVCQAYKAPRSHHCRKCNRCVMKMDHHCPWINNCCGHQNHASFTLFLL. Cys129 functions as the S-palmitoyl cysteine intermediate in the catalytic mechanism. Residues 144-164 traverse the membrane as a helical segment; the sequence is FTLFLLLAPLGCTHAAFIFVM. Residues 165-194 lie on the Lumenal side of the membrane; sequence TMYTQLYNRLSFGWNTVKIDMSAARRDPPP. The helical transmembrane segment at 195 to 215 threads the bilayer; sequence IVPFGLAAFAATLFALGLALG. The Cytoplasmic portion of the chain corresponds to 216–413; sequence TTIAVGMLFF…PAPEGEKKNR (198 aa). The SH3 domain occupies 313–398; sequence VRSVRYKVIE…PRNCVEKCPC (86 aa). Residues Cys328, Cys329, and Cys343 are each lipidated (S-palmitoyl cysteine). The short motif at 410 to 413 is the Di-lysine motif element; sequence KKNR.

This sequence belongs to the DHHC palmitoyltransferase family. In terms of assembly, homooligomerizes. Interacts with SELENOK. Post-translationally, palmitoylated at 3 different sites by ZDHHC16. The combination of the different palmitoylation events strongly affects the quaternary assembly of ZDHHC6, its localization, stability and function. Palmitoylation at Cys-328 accelerates the turnover of ZDHHC6. Depalmitoylated by LYPLA2.

Its subcellular location is the endoplasmic reticulum membrane. It catalyses the reaction L-cysteinyl-[protein] + hexadecanoyl-CoA = S-hexadecanoyl-L-cysteinyl-[protein] + CoA. The enzyme catalyses L-cysteinyl-[protein] + octadecanoyl-CoA = S-octadecanoyl-L-cysteinyl-[protein] + CoA. In terms of biological role, endoplasmic reticulum palmitoyl acyltransferase that mediates palmitoylation of proteins such as AMFR, CALX, ITPR1 and TFRC. Palmitoylates calnexin (CALX), which is required for its association with the ribosome-translocon complex and efficient folding of glycosylated proteins. Mediates palmitoylation of AMFR, promoting AMFR distribution to the peripheral endoplasmic reticulum. Together with SELENOK, palmitoylates ITPR1 in immune cells, leading to regulate ITPR1 stability and function. Stearoyltransferase that mediates stearoylation of TFRC to inhibit TFRC-mediated activation of the JNK pathway and mitochondrial fragmentation. The polypeptide is Palmitoyltransferase ZDHHC6 (Mus musculus (Mouse)).